The sequence spans 340 residues: Coproporphyrin III ferrochelatase (340 aa).

Residues serine 52 and tyrosine 121 each contribute to the Fe-coproporphyrin III site. Fe(2+)-binding residues include histidine 181 and glutamate 264.

The protein belongs to the ferrochelatase family.

It is found in the cytoplasm. The catalysed reaction is Fe-coproporphyrin III + 2 H(+) = coproporphyrin III + Fe(2+). Its pathway is porphyrin-containing compound metabolism; protoheme biosynthesis. Involved in coproporphyrin-dependent heme b biosynthesis. Catalyzes the insertion of ferrous iron into coproporphyrin III to form Fe-coproporphyrin III. This Mycolicibacterium smegmatis (strain ATCC 700084 / mc(2)155) (Mycobacterium smegmatis) protein is Coproporphyrin III ferrochelatase.